We begin with the raw amino-acid sequence, 132 residues long: Agouti-signaling protein (132 aa).

A signal peptide spans 1-22; that stretch reads MDVTRLLLATLLVFLCFFTAYS. An N-linked (GlcNAc...) asparagine glycan is attached at N39. The segment at 61–87 is disordered; sequence QISRKEAEKKRSSKKEASMKKVARPRT. A compositionally biased stretch (basic and acidic residues) spans 63–79; the sequence is SRKEAEKKRSSKKEASM. Cystine bridges form between C93-C108, C100-C114, C107-C125, C111-C132, and C116-C123. Residues 93–132 form the Agouti domain; the sequence is CVATRDSCKPPAPACCDPCASCQCRFFRSACSCRVLSLNC.

The protein localises to the secreted. In terms of biological role, involved in the regulation of melanogenesis. The binding of ASP to MC1R precludes alpha-MSH initiated signaling and thus blocks production of cAMP, leading to a down-regulation of eumelanogenesis (brown/black pigment) and thus increasing synthesis of pheomelanin (yellow/red pigment). The sequence is that of Agouti-signaling protein (ASIP) from Macaca maura (Moor macaque).